A 438-amino-acid polypeptide reads, in one-letter code: MTESYFASIAPIEFEGAASENPLAYRYYDKNRVVLGKRMEDHLRMAVCYWHTFCSEGADMFGPGTFHRPWHIGPMDQAHAEHKLNEAFEFFTRLGLPFFCFHDTDVMAEAHTIREHVDNLARIGDRIQEKMAATGVKLLWGTANLFSHPRYMAGAASNPDPDVFRFAATQVRHCMDLTKRLGGQNYVLWGGREGYDSLLNTDLKQEKAQLGRFLKMVIEHKHKIGFSGTILIEPKPHEPTKHQYDFDVETVYSFLVANGLEKEVKLNIEANHATLAGHSFEHEIATAVALGVFGSIDMNRGDPQNGWDTDQFPNDVREITTALYYILLGGGFTTGGNNFDAKVRRQSFEPADLFYAHVGAVDTVAQGLINAAAMIEGGQLAGIVKERYAGWQGELGRAILDGKMSLEALSDGAVAEGITPRPRSGRQEMIENLVGRYL.

Catalysis depends on residues H102 and D105. The Mg(2+) site is built by E233, E269, H272, D297, D308, D310, and D340.

The protein belongs to the xylose isomerase family. Homotetramer. The cofactor is Mg(2+).

The protein resides in the cytoplasm. The enzyme catalyses alpha-D-xylose = alpha-D-xylulofuranose. In Solibacter usitatus (strain Ellin6076), this protein is Xylose isomerase.